Here is a 479-residue protein sequence, read N- to C-terminus: Glycerol kinase 5 (479 aa).

Residues Ser-20 and Ser-21 each contribute to the ATP site. Glycerol-binding residues include Arg-90, Asp-267, and Gln-268. ATP contacts are provided by Thr-289, Gly-332, and Gly-432.

The protein belongs to the FGGY kinase family.

It is found in the cytoplasm. The catalysed reaction is glycerol + ATP = sn-glycerol 3-phosphate + ADP + H(+). It functions in the pathway polyol metabolism; glycerol degradation via glycerol kinase pathway; sn-glycerol 3-phosphate from glycerol: step 1/1. Skin-specific kinase that plays a key role in glycerol metabolism, catalyzing its phosphorylation to produce sn-glycerol 3-phosphate. Involved in skin-specific regulation of sterol regulatory element-binding protein (SREBP) processing and lipid biosynthesis. The polypeptide is Glycerol kinase 5 (gk5) (Xenopus laevis (African clawed frog)).